The following is a 193-amino-acid chain: Holliday junction branch migration complex subunit RuvA (193 aa).

Residues 1 to 64 (MIGRIAGTLL…EDAHLLYGFL (64 aa)) form a domain I region. The domain II stretch occupies residues 65–139 (TPPERSTFRE…GKLGADLGPL (75 aa)). A flexible linker region spans residues 139–143 (LAGAA). The tract at residues 144 to 193 (SPSDHATDILNALVALGYSEKEALAAIKNVPAGTGVSEGIKLSLKALSKA) is domain III.

This sequence belongs to the RuvA family. As to quaternary structure, homotetramer. Forms an RuvA(8)-RuvB(12)-Holliday junction (HJ) complex. HJ DNA is sandwiched between 2 RuvA tetramers; dsDNA enters through RuvA and exits via RuvB. An RuvB hexamer assembles on each DNA strand where it exits the tetramer. Each RuvB hexamer is contacted by two RuvA subunits (via domain III) on 2 adjacent RuvB subunits; this complex drives branch migration. In the full resolvosome a probable DNA-RuvA(4)-RuvB(12)-RuvC(2) complex forms which resolves the HJ.

Its subcellular location is the cytoplasm. In terms of biological role, the RuvA-RuvB-RuvC complex processes Holliday junction (HJ) DNA during genetic recombination and DNA repair, while the RuvA-RuvB complex plays an important role in the rescue of blocked DNA replication forks via replication fork reversal (RFR). RuvA specifically binds to HJ cruciform DNA, conferring on it an open structure. The RuvB hexamer acts as an ATP-dependent pump, pulling dsDNA into and through the RuvAB complex. HJ branch migration allows RuvC to scan DNA until it finds its consensus sequence, where it cleaves and resolves the cruciform DNA. This chain is Holliday junction branch migration complex subunit RuvA, found in Burkholderia mallei (strain NCTC 10229).